We begin with the raw amino-acid sequence, 701 residues long: 1,4-alpha-glucan branching enzyme GlgB (701 aa).

The active-site Nucleophile is the aspartate 381. Catalysis depends on glutamate 434, which acts as the Proton donor.

This sequence belongs to the glycosyl hydrolase 13 family. GlgB subfamily. As to quaternary structure, monomer.

The enzyme catalyses Transfers a segment of a (1-&gt;4)-alpha-D-glucan chain to a primary hydroxy group in a similar glucan chain.. The protein operates within glycan biosynthesis; glycogen biosynthesis. Functionally, catalyzes the formation of the alpha-1,6-glucosidic linkages in glycogen by scission of a 1,4-alpha-linked oligosaccharide from growing alpha-1,4-glucan chains and the subsequent attachment of the oligosaccharide to the alpha-1,6 position. The chain is 1,4-alpha-glucan branching enzyme GlgB from Jannaschia sp. (strain CCS1).